Here is a 220-residue protein sequence, read N- to C-terminus: Deoxyribose-phosphate aldolase (220 aa).

Residue aspartate 89 is the Proton donor/acceptor of the active site. Lysine 151 (schiff-base intermediate with acetaldehyde) is an active-site residue. Catalysis depends on lysine 180, which acts as the Proton donor/acceptor.

Belongs to the DeoC/FbaB aldolase family. DeoC type 1 subfamily.

The protein resides in the cytoplasm. It catalyses the reaction 2-deoxy-D-ribose 5-phosphate = D-glyceraldehyde 3-phosphate + acetaldehyde. The protein operates within carbohydrate degradation; 2-deoxy-D-ribose 1-phosphate degradation; D-glyceraldehyde 3-phosphate and acetaldehyde from 2-deoxy-alpha-D-ribose 1-phosphate: step 2/2. In terms of biological role, catalyzes a reversible aldol reaction between acetaldehyde and D-glyceraldehyde 3-phosphate to generate 2-deoxy-D-ribose 5-phosphate. The polypeptide is Deoxyribose-phosphate aldolase (Lactococcus lactis subsp. cremoris (strain SK11)).